The primary structure comprises 365 residues: Phospho-N-acetylmuramoyl-pentapeptide-transferase (365 aa).

A run of 10 helical transmembrane segments spans residues 22-42, 74-94, 95-115, 134-154, 169-189, 201-221, 240-260, 268-288, 292-312, and 342-362; these read YVSVRIIMISITSLLITLFLG, TMGGVLILSSVIISALLWGSL, SSIYLWILILVVIFFGAIGFF, KFALQSIFSIILAIVLFYLLS, LHIPMGIFLFVVLTFFIINGS, GLAIVPVVLVAAGLGIYAYIQ, LAEVAVFCAALCGSGLAFLWF, FMGDVGSLTLGAVLGVIAVMI, LIFFIMGLLFVVEALSVMLQV, and KVVIRFWIVSLILFLIGLVAI.

Belongs to the glycosyltransferase 4 family. MraY subfamily. The cofactor is Mg(2+).

The protein resides in the cell inner membrane. The enzyme catalyses UDP-N-acetyl-alpha-D-muramoyl-L-alanyl-gamma-D-glutamyl-meso-2,6-diaminopimeloyl-D-alanyl-D-alanine + di-trans,octa-cis-undecaprenyl phosphate = di-trans,octa-cis-undecaprenyl diphospho-N-acetyl-alpha-D-muramoyl-L-alanyl-D-glutamyl-meso-2,6-diaminopimeloyl-D-alanyl-D-alanine + UMP. It functions in the pathway cell wall biogenesis; peptidoglycan biosynthesis. In terms of biological role, catalyzes the initial step of the lipid cycle reactions in the biosynthesis of the cell wall peptidoglycan: transfers peptidoglycan precursor phospho-MurNAc-pentapeptide from UDP-MurNAc-pentapeptide onto the lipid carrier undecaprenyl phosphate, yielding undecaprenyl-pyrophosphoryl-MurNAc-pentapeptide, known as lipid I. The sequence is that of Phospho-N-acetylmuramoyl-pentapeptide-transferase from Francisella philomiragia subsp. philomiragia (strain ATCC 25017 / CCUG 19701 / FSC 153 / O#319-036).